Here is a 236-residue protein sequence, read N- to C-terminus: tRNA (guanine-N(7)-)-methyltransferase (236 aa).

S-adenosyl-L-methionine contacts are provided by residues Gly-54, 77-78 (EI), 110-111 (NA), and Leu-130. Residue Asp-133 is part of the active site. 208 to 210 (TEE) is an S-adenosyl-L-methionine binding site.

The protein belongs to the class I-like SAM-binding methyltransferase superfamily. TrmB family.

It is found in the nucleus. It catalyses the reaction guanosine(46) in tRNA + S-adenosyl-L-methionine = N(7)-methylguanosine(46) in tRNA + S-adenosyl-L-homocysteine. It functions in the pathway tRNA modification; N(7)-methylguanine-tRNA biosynthesis. In terms of biological role, catalyzes the formation of N(7)-methylguanine at position 46 (m7G46) in tRNA. The chain is tRNA (guanine-N(7)-)-methyltransferase from Bombyx mori (Silk moth).